A 71-amino-acid chain; its full sequence is Biotinylated protein TB7.3 (71 aa).

Residues 2–71 (AEDVRAEIVA…QAGDLIAVIS (70 aa)) form the Biotinyl-binding domain. Residue Lys-37 is modified to N6-biotinyllysine.

The polypeptide is Biotinylated protein TB7.3 (Mycobacterium bovis (strain ATCC BAA-935 / AF2122/97)).